Consider the following 303-residue polypeptide: UDP-3-O-acyl-N-acetylglucosamine deacetylase (303 aa).

Zn(2+) is bound by residues His-78, His-237, and Asp-241. Residue His-264 is the Proton donor of the active site.

Belongs to the LpxC family. Zn(2+) serves as cofactor.

It catalyses the reaction a UDP-3-O-[(3R)-3-hydroxyacyl]-N-acetyl-alpha-D-glucosamine + H2O = a UDP-3-O-[(3R)-3-hydroxyacyl]-alpha-D-glucosamine + acetate. The protein operates within glycolipid biosynthesis; lipid IV(A) biosynthesis; lipid IV(A) from (3R)-3-hydroxytetradecanoyl-[acyl-carrier-protein] and UDP-N-acetyl-alpha-D-glucosamine: step 2/6. Catalyzes the hydrolysis of UDP-3-O-myristoyl-N-acetylglucosamine to form UDP-3-O-myristoylglucosamine and acetate, the committed step in lipid A biosynthesis. This Teredinibacter turnerae (strain ATCC 39867 / T7901) protein is UDP-3-O-acyl-N-acetylglucosamine deacetylase.